We begin with the raw amino-acid sequence, 207 residues long: Casparian strip membrane protein 3 (207 aa).

Residues 1–45 (MDSTKSTEETAINIPRESSSTKHKIAVAAVKAVATPHKRGGMKRG) lie on the Cytoplasmic side of the membrane. The helical transmembrane segment at 46–66 (VAIFDFILRICALAAALAATA) threads the bilayer. Over 67–95 (TMGTTDQTLPFFTQFFQFQASYDDLPTFT) the chain is Extracellular. Residues 96–116 (FFVIANAIASGYLVLSLPFSI) traverse the membrane as a helical segment. Topologically, residues 117–128 (VAIVRPHVTGVK) are cytoplasmic. A helical membrane pass occupies residues 129 to 149 (LLLLILDTVLVAFTTAAAASA). The Extracellular portion of the chain corresponds to 150–181 (AAIVYLAHNGNSNTNWFAICQQFNDFCQRTSG). A helical transmembrane segment spans residues 182–202 (AVVASFIAAAIFIFLVVLSAV). Over 203 to 207 (ALRRH) the chain is Cytoplasmic.

This sequence belongs to the Casparian strip membrane proteins (CASP) family. Homodimer and heterodimers.

Its subcellular location is the cell membrane. Functionally, regulates membrane-cell wall junctions and localized cell wall deposition. Required for establishment of the Casparian strip membrane domain (CSD) and the subsequent formation of Casparian strips, a cell wall modification of the root endodermis that determines an apoplastic barrier between the intraorganismal apoplasm and the extraorganismal apoplasm and prevents lateral diffusion. In Erythranthe guttata (Yellow monkey flower), this protein is Casparian strip membrane protein 3.